The chain runs to 115 residues: MSDALDDENVLCFRYKSYYIKDDGSRIDTLNEERIKHIVDFTLDKYLDATQNTPKFDNFENPVKEGFNSIFACESKEAAIEYYKEFKKQIEQKKLPIKIASIIAQTKVVMNKKLV.

The middle section of a putative type I restriction enzyme that if reconstituted might recognize 5'-GAN(7)TAY-3' and cleave a random distance away. Subunit R is required for both nuclease and ATPase activities, but not for modification. The sequence is that of Putative type I restriction enzyme MpnIIP endonuclease subunit middle part from Mycoplasma pneumoniae (strain ATCC 29342 / M129 / Subtype 1) (Mycoplasmoides pneumoniae).